A 453-amino-acid polypeptide reads, in one-letter code: MPHWAAVIMAAGKGTRMKSKLPKVMHTLAGKPMLQHVLDCVRSVEIPRSMVVLGHGREQIEATLDDRTEVVVQEEQCGTGHAIMQAIPHCHEVDHIIVLSGDQPLIRPETLRNLIRIHIEHNAAATLLTACFENPHGLGRILKEGDQFLRVVEEKDATPEERLVQEINTGTYCFNVAKLREALKNITPKNAQGEYYLTDVFAVFHAQGEVIRTYCTEDVHEALGINSRAQLAAAEDVARQRILSYWMEEGVTIIDPRSTFIEAGVVLQPDVVLQPFTILKGRTQVAEDAVIGPHTTLTDCTVGAGSEVSHTVGNQAVIGGHCTIGPYAYLRPGTVLQDKVKVGDFVEIKNSQIGEGSKIPHLSYVGDSQVGKSVNIGAGTITCNYDGVNKYKTIIRDKAFLGSNTNLVAPVEIGEGSVTGAGSTISKNVPANTLAIERSTQKHIENWVRNKKK.

Positions 1–228 (MPHWAAVIMA…VHEALGINSR (228 aa)) are pyrophosphorylase. UDP-N-acetyl-alpha-D-glucosamine contacts are provided by residues lysine 23, glutamine 73, 78-79 (GT), 100-102 (SGD), glycine 139, glutamate 153, asparagine 168, and asparagine 226. Aspartate 102 is a Mg(2+) binding site. Mg(2+) is bound at residue asparagine 226. Residues 229 to 249 (AQLAAAEDVARQRILSYWMEE) form a linker region. Residues 250-453 (GVTIIDPRST…IENWVRNKKK (204 aa)) form an N-acetyltransferase region. Arginine 331 and lysine 349 together coordinate UDP-N-acetyl-alpha-D-glucosamine. Histidine 361 (proton acceptor) is an active-site residue. UDP-N-acetyl-alpha-D-glucosamine-binding residues include tyrosine 364 and asparagine 375. Acetyl-CoA-binding positions include alanine 378, 384–385 (NY), serine 403, alanine 421, and arginine 438.

It in the N-terminal section; belongs to the N-acetylglucosamine-1-phosphate uridyltransferase family. In the C-terminal section; belongs to the transferase hexapeptide repeat family. In terms of assembly, homotrimer. Mg(2+) serves as cofactor.

It localises to the cytoplasm. The enzyme catalyses alpha-D-glucosamine 1-phosphate + acetyl-CoA = N-acetyl-alpha-D-glucosamine 1-phosphate + CoA + H(+). It catalyses the reaction N-acetyl-alpha-D-glucosamine 1-phosphate + UTP + H(+) = UDP-N-acetyl-alpha-D-glucosamine + diphosphate. The protein operates within nucleotide-sugar biosynthesis; UDP-N-acetyl-alpha-D-glucosamine biosynthesis; N-acetyl-alpha-D-glucosamine 1-phosphate from alpha-D-glucosamine 6-phosphate (route II): step 2/2. It participates in nucleotide-sugar biosynthesis; UDP-N-acetyl-alpha-D-glucosamine biosynthesis; UDP-N-acetyl-alpha-D-glucosamine from N-acetyl-alpha-D-glucosamine 1-phosphate: step 1/1. It functions in the pathway bacterial outer membrane biogenesis; LPS lipid A biosynthesis. In terms of biological role, catalyzes the last two sequential reactions in the de novo biosynthetic pathway for UDP-N-acetylglucosamine (UDP-GlcNAc). The C-terminal domain catalyzes the transfer of acetyl group from acetyl coenzyme A to glucosamine-1-phosphate (GlcN-1-P) to produce N-acetylglucosamine-1-phosphate (GlcNAc-1-P), which is converted into UDP-GlcNAc by the transfer of uridine 5-monophosphate (from uridine 5-triphosphate), a reaction catalyzed by the N-terminal domain. This is Bifunctional protein GlmU from Desulfitobacterium hafniense (strain Y51).